Here is a 478-residue protein sequence, read N- to C-terminus: POU domain, class 2, transcription factor 2 (478 aa).

Disordered stretches follow at residues 1-82, 167-199, 275-298, 357-391, and 409-478; these read MVHS…PPQA, QAVTRPTLSDPHLSHPQPPKCLEPPSHPEEASD, SSLPSPNQLSRPSLGFDGLPGRRR, PCSAAPMLPSPGKPASYSPHLVTPQGGAGTLPLSQ, and TLHP…PYQP. Over residues 12 to 37 the composition is skewed to basic and acidic residues; the sequence is RMSKPLEAEKQGLDSPSEHTDTERNG. Polar residues predominate over residues 38 to 60; that stretch reads PDTNHQNPQNKTSPFSVSPTGPS. The POU-specific domain maps to 195–269; the sequence is EEASDLEELE…LLEKWLNDAE (75 aa). A compositionally biased stretch (polar residues) spans 275 to 285; it reads SSLPSPNQLSR. A DNA-binding region (homeobox) is located at residues 297-356; it reads RRKKRTSIETNVRFALEKSFLANQKPTSEEILLIAEQLHMEKEVIRVWFCNRRQKEKRIN. Positions 389–410 are leucine-zipper; it reads LSQASSSLSTTVTTLSSAVGTL. The span at 416 to 425 shows a compositional bias: gly residues; it reads AGGGAAGGGA.

The protein belongs to the POU transcription factor family. Class-2 subfamily. In terms of assembly, interacts with NR3C1, AR and PGR. Interacts with POU2AF1; the interaction increases POU2F2 transactivation activity. As to expression, predominantly expressed in B-cells.

It localises to the nucleus. Transactivation activity is enhanced by transcriptional coactivator POU2AF1. Its function is as follows. Transcription factor that specifically binds to the octamer motif (5'-ATTTGCAT-3'). Regulates IL6 expression in B cells with POU2AF1. Regulates transcription in a number of tissues in addition to activating immunoglobulin gene expression. Modulates transcription transactivation by NR3C1, AR and PGR. The sequence is that of POU domain, class 2, transcription factor 2 (POU2F2) from Sus scrofa (Pig).